The chain runs to 159 residues: Transcription elongation factor A protein-like 1 (159 aa).

Residues 1-120 (MEKACKEPEE…PQFRGDIHGR (120 aa)) are disordered. The segment covering 17 to 34 (KADEERPSVEPSPEKSSP) has biased composition (basic and acidic residues). Acidic residues predominate over residues 37–54 (QSSEEVSSEEEFFPDELL). Composition is skewed to basic and acidic residues over residues 64 to 80 (SEERPPQERLSRKDLFE) and 95 to 119 (HKLEEGSFKERLARSRPQFRGDIHG).

Belongs to the TFS-II family. TFA subfamily.

The protein resides in the nucleus. Functionally, may be involved in transcriptional regulation. Modulates various viral and cellular promoters in a promoter context-dependent manner. Does not bind DNA directly. The polypeptide is Transcription elongation factor A protein-like 1 (Bos taurus (Bovine)).